Reading from the N-terminus, the 153-residue chain is ATP synthase subunit b' (153 aa).

The helical transmembrane segment at 23-40 threads the bilayer; sequence LMAIQVVALTYILNSLFF.

It belongs to the ATPase B chain family. In terms of assembly, F-type ATPases have 2 components, F(1) - the catalytic core - and F(0) - the membrane proton channel. F(1) has five subunits: alpha(3), beta(3), gamma(1), delta(1), epsilon(1). F(0) has four main subunits: a(1), b(1), b'(1) and c(10-14). The alpha and beta chains form an alternating ring which encloses part of the gamma chain. F(1) is attached to F(0) by a central stalk formed by the gamma and epsilon chains, while a peripheral stalk is formed by the delta, b and b' chains.

The protein resides in the cellular thylakoid membrane. Functionally, f(1)F(0) ATP synthase produces ATP from ADP in the presence of a proton or sodium gradient. F-type ATPases consist of two structural domains, F(1) containing the extramembraneous catalytic core and F(0) containing the membrane proton channel, linked together by a central stalk and a peripheral stalk. During catalysis, ATP synthesis in the catalytic domain of F(1) is coupled via a rotary mechanism of the central stalk subunits to proton translocation. In terms of biological role, component of the F(0) channel, it forms part of the peripheral stalk, linking F(1) to F(0). The b'-subunit is a diverged and duplicated form of b found in plants and photosynthetic bacteria. This is ATP synthase subunit b' from Prochlorococcus marinus (strain MIT 9312).